Here is a 428-residue protein sequence, read N- to C-terminus: MYEESSCFDPNSMVDNNGGFCAAETTFTVSHQFQPPLGSTTNSFDDDLKLPTMDEFSVFPSVISLPNSETQNQNISNNNHLINQMIQESNWGVSEDNSNFFMNTSHPNTTTTPIPDLLSLLHLPRCSMSLPSSDIMAGSCFTYDPLFHLNLPPQPPLIPSNDYSGYLLGIDTNTTTQRDESNVGDENNNAQFDSGIIEFSKEIRRKGRGKRKNKPFTTERERRCHLNERYEALKLLIPSPSKGDRASILQDGIDYINELRRRVSELKYLVERKRCGGRHKNNEVDDNNNNKNLDDHGNEDDDDDDENMEKKPESDVIDQCSSNNSLRCSWLQRKSKVTEVDVRIVDDEVTIKVVQKKKINCLLLVSKVLDQLQLDLHHVAGGQIGEHYSFLFNTKIYEGSTIYASAIANRVIEVVDKHYMASLPNSNY.

Residues 210–259 enclose the bHLH domain; the sequence is KRKNKPFTTERERRCHLNERYEALKLLIPSPSKGDRASILQDGIDYINEL. Residues 278–320 form a disordered region; that stretch reads RHKNNEVDDNNNNKNLDDHGNEDDDDDDENMEKKPESDVIDQC. The segment covering 297-307 has biased composition (acidic residues); that stretch reads GNEDDDDDDEN.

As to quaternary structure, homodimer. As to expression, flowers.

The protein resides in the nucleus. The protein is Transcription factor bHLH91 (BHLH91) of Arabidopsis thaliana (Mouse-ear cress).